The primary structure comprises 219 residues: Octanoyltransferase (219 aa).

Residues 37–219 (EHSPDQLWIL…DFNDVQVILQ (183 aa)) enclose the BPL/LPL catalytic domain. Substrate contacts are provided by residues 76-83 (RGGQVTWH), 143-145 (SLG), and 156-158 (GLA). Cys-174 (acyl-thioester intermediate) is an active-site residue.

The protein belongs to the LipB family.

The protein localises to the cytoplasm. It catalyses the reaction octanoyl-[ACP] + L-lysyl-[protein] = N(6)-octanoyl-L-lysyl-[protein] + holo-[ACP] + H(+). The protein operates within protein modification; protein lipoylation via endogenous pathway; protein N(6)-(lipoyl)lysine from octanoyl-[acyl-carrier-protein]: step 1/2. Its function is as follows. Catalyzes the transfer of endogenously produced octanoic acid from octanoyl-acyl-carrier-protein onto the lipoyl domains of lipoate-dependent enzymes. Lipoyl-ACP can also act as a substrate although octanoyl-ACP is likely to be the physiological substrate. In Acinetobacter baylyi (strain ATCC 33305 / BD413 / ADP1), this protein is Octanoyltransferase.